Here is a 1032-residue protein sequence, read N- to C-terminus: Probable ATP-dependent RNA helicase DDX46 (1032 aa).

Residues 1-24 are compositionally biased toward basic residues; the sequence is MGRESRHYRKRSASRGRSGSRSRS. The segment at 1-227 is disordered; sequence MGRESRHYRK…NEMEDEELDP (227 aa). Residue Gly-2 is the site of N-myristoyl glycine attachment. The span at 26–49 shows a compositional bias: basic and acidic residues; the sequence is SPSDKRSKRGDDRRSRSRDRDRRR. Composition is skewed to basic residues over residues 50–73 and 81–103; these read ERSR…RSRS and ERRR…RRSR. Positions 112–200 are enriched in basic and acidic residues; sequence KKAENRSRSK…EMKQGKKWSL (89 aa). Positions 152 to 197 form a coiled coil; it reads DQNKLEEEMRKRKERVEKWREEQRKKAMENIGELKKEIEEMKQGKK. A Glycyl lysine isopeptide (Lys-Gly) (interchain with G-Cter in SUMO2) cross-link involves residue Lys-186. Ser-199 is subject to Phosphoserine. Residues 201 to 211 show a composition bias toward acidic residues; that stretch reads EDDDDDEDDPA. Position 263 is an N6-acetyllysine (Lys-263). Tyr-294 bears the Phosphotyrosine mark. Residues Ser-295 and Ser-296 each carry the phosphoserine modification. Lys-325 participates in a covalent cross-link: Glycyl lysine isopeptide (Lys-Gly) (interchain with G-Cter in SUMO2). Ser-346 bears the Phosphoserine mark. Positions 372–400 match the Q motif motif; the sequence is KSWVQCGISMKILNSLKKHGYEKPTPIQT. The Helicase ATP-binding domain occupies 403–581; sequence IPAIMSGRDL…RRILSKPIEV (179 aa). The DEAD box motif lies at 529–532; sequence DEAD. Residues 592 to 753 enclose the Helicase C-terminal domain; sequence DVEQQVIVIE…AVPPDLEKLW (162 aa). The residue at position 776 (Lys-776) is an N6-acetyllysine. Lys-779 participates in a covalent cross-link: Glycyl lysine isopeptide (Lys-Gly) (interchain with G-Cter in SUMO2). Position 804 is a phosphoserine (Ser-804). The residue at position 904 (Lys-904) is an N6-acetyllysine. Residues Lys-908 and Lys-916 each participate in a glycyl lysine isopeptide (Lys-Gly) (interchain with G-Cter in SUMO2) cross-link. Ser-929 bears the Phosphoserine mark.

This sequence belongs to the DEAD box helicase family. DDX46/PRP5 subfamily. In terms of assembly, component of the 17S U2 SnRNP complex, a ribonucleoprotein complex that contains small nuclear RNA (snRNA) U2 and a number of specific proteins. Within the 17S U2 SnRNP complex, DDX46 is part of the SF3B subcomplex, which is required for 'A' complex assembly formed by the stable binding of U2 snRNP to the branchpoint sequence in pre-mRNA. Recruited to the 17S U2 SnRNP complex following release of DDX42; DDX42 and DDX46 bind the SF3B subcomplex in a competitive manner.

The protein localises to the nucleus speckle. It is found in the nucleus. The protein resides in the cajal body. It catalyses the reaction ATP + H2O = ADP + phosphate + H(+). In terms of biological role, component of the 17S U2 SnRNP complex of the spliceosome, a large ribonucleoprotein complex that removes introns from transcribed pre-mRNAs. The 17S U2 SnRNP complex (1) directly participates in early spliceosome assembly and (2) mediates recognition of the intron branch site during pre-mRNA splicing by promoting the selection of the pre-mRNA branch-site adenosine, the nucleophile for the first step of splicing. Within the 17S U2 SnRNP complex, DDX46 plays essential roles during assembly of pre-spliceosome and proofreading of the branch site. The protein is Probable ATP-dependent RNA helicase DDX46 (Ddx46) of Rattus norvegicus (Rat).